Consider the following 508-residue polypeptide: Vacuolar serine-type carboxypeptidase ATG42 (508 aa).

The first 24 residues, 1–24, serve as a signal peptide directing secretion; the sequence is MKYLNLVFVLQLLISIKYASFGRA. 5 disulfides stabilise this stretch: Cys132–Cys375, Cys267–Cys281, Cys291–Cys314, Cys298–Cys307, and Cys336–Cys345. An N-linked (GlcNAc...) asparagine glycan is attached at Asn163. The active site involves Ser219. An N-linked (GlcNAc...) asparagine glycan is attached at Asn242. Asn339 and Asn371 each carry an N-linked (GlcNAc...) asparagine glycan. Asp415 is a catalytic residue. Cys418 serves as a coordination point for substrate. Residue His474 is part of the active site. Residue Met475 participates in substrate binding.

This sequence belongs to the peptidase S10 family.

Its subcellular location is the vacuole lumen. The catalysed reaction is Release of a C-terminal amino acid with broad specificity.. In terms of biological role, vacuolar serine-type carboxypeptidase involved in vacuolar zymogen activation, breakdown of the autophagic body, and autophagosome-dependent protein synthesis. Plays a key role in phytochelatin (PC) synthesis from glutathione (GSH) by cleaving the Gly from GSH and form the PC-peptides of the structure (gamma-Glu-Cys)2-Gly. Also involved in resistance to xenobiotics via the degradation of glutathione-S-conjugates. This chain is Vacuolar serine-type carboxypeptidase ATG42, found in Saccharomyces cerevisiae (strain ATCC 204508 / S288c) (Baker's yeast).